Reading from the N-terminus, the 692-residue chain is Elongation factor G (692 aa).

A tr-type G domain is found at Glu-8 to Leu-282. Residues Ala-17–Thr-24, Asp-81–His-85, and Asn-135–Asp-138 contribute to the GTP site.

This sequence belongs to the TRAFAC class translation factor GTPase superfamily. Classic translation factor GTPase family. EF-G/EF-2 subfamily.

Its subcellular location is the cytoplasm. Catalyzes the GTP-dependent ribosomal translocation step during translation elongation. During this step, the ribosome changes from the pre-translocational (PRE) to the post-translocational (POST) state as the newly formed A-site-bound peptidyl-tRNA and P-site-bound deacylated tRNA move to the P and E sites, respectively. Catalyzes the coordinated movement of the two tRNA molecules, the mRNA and conformational changes in the ribosome. The polypeptide is Elongation factor G (Bacillus cereus (strain ATCC 14579 / DSM 31 / CCUG 7414 / JCM 2152 / NBRC 15305 / NCIMB 9373 / NCTC 2599 / NRRL B-3711)).